The primary structure comprises 1060 residues: RNA-binding protein 27 (1060 aa).

2 stretches are compositionally biased toward basic and acidic residues: residues 91-102 (LVQEKEEIKEEV) and 124-143 (TRSESSERRTREKKREDGKW). Disordered stretches follow at residues 91–143 (LVQE…DGKW) and 162–235 (WRRG…GAQS). Residues 165–185 (GRSKSRSKSRGLSRSRSRSRG) show a composition bias toward basic residues. Residues 186–211 (RSKDRDPNRNVEHRERSKFKSERNDL) are compositionally biased toward basic and acidic residues. Residues 225–235 (SSEQYSSGAQS) are compositionally biased toward polar residues. The C3H1-type zinc-finger motif lies at 273 to 301 (LPPKRRCRDYDERGFCVLGDLCQFDHGND). 2 stretches are compositionally biased toward pro residues: residues 319–356 (PPPGLPPPPPPGMLMPPMPGPGPGPGPGPGPGPGPGPG) and 371–384 (QPPPSVVLPIPRPP). The interval 319–412 (PPPGLPPPPP…PNLASVGTRL (94 aa)) is disordered. A compositionally biased stretch (polar residues) spans 386-402 (TQSSLINSRDQPGTSAV). T447 bears the Phosphothreonine mark. R455 carries the post-translational modification Omega-N-methylarginine. The interval 565-592 (MSGLEGPLTKKPWLGKQGNNNQNKPGFL) is disordered. Low complexity predominate over residues 579 to 588 (GKQGNNNQNK). In terms of domain architecture, RRM spans 600-674 (TKLEVKKIPQ…RFIRVLWHRE (75 aa)). Residues 809-886 (VQEVLKKKQE…KDELKTSSAV (78 aa)) adopt a coiled-coil conformation. Position 927 is a phosphoserine (S927). Disordered stretches follow at residues 940–968 (PVGRGKTMSSQGRGRGRGRGGRGRGSLNH) and 1006–1060 (DRRL…SWRR). A phosphoserine mark is found at S1012 and S1020. The span at 1024–1053 (ETEEEEVKEEETETSDLFLPDDDDEDEDEY) shows a compositional bias: acidic residues.

It is found in the cytoplasm. It localises to the nucleus speckle. Functionally, may be involved in the turnover of nuclear polyadenylated (pA+) RNA. The chain is RNA-binding protein 27 from Homo sapiens (Human).